Reading from the N-terminus, the 214-residue chain is Methylthioribulose-1-phosphate dehydratase (214 aa).

The Zn(2+) site is built by His-103 and His-105.

This sequence belongs to the aldolase class II family. MtnB subfamily. It depends on Zn(2+) as a cofactor.

It carries out the reaction 5-(methylsulfanyl)-D-ribulose 1-phosphate = 5-methylsulfanyl-2,3-dioxopentyl phosphate + H2O. It functions in the pathway amino-acid biosynthesis; L-methionine biosynthesis via salvage pathway; L-methionine from S-methyl-5-thio-alpha-D-ribose 1-phosphate: step 2/6. In terms of biological role, catalyzes the dehydration of methylthioribulose-1-phosphate (MTRu-1-P) into 2,3-diketo-5-methylthiopentyl-1-phosphate (DK-MTP-1-P). The polypeptide is Methylthioribulose-1-phosphate dehydratase (Granulibacter bethesdensis (strain ATCC BAA-1260 / CGDNIH1)).